The primary structure comprises 446 residues: NADH-ubiquinone oxidoreductase chain 4 (446 aa).

Transmembrane regions (helical) follow at residues 4 to 24 (LILM…FWMV), 28 to 48 (LFVI…FVNI), 56 to 76 (VLSY…IVAS), 88 to 105 (LFLF…LTFS), 109 to 131 (LFMF…LGWG), 141 to 161 (VYLL…IFYL), 182 to 202 (LLYL…LVHL), 218 to 238 (ILAG…FSFL), 245 to 265 (YNYI…LVCL), 272 to 292 (ALIA…LMTL), 297 to 317 (LSGS…LFCL), 330 to 350 (LLIN…WFLL), 373 to 393 (IVSW…FSAA), and 426 to 446 (FLHW…LFWI).

Belongs to the complex I subunit 4 family.

The protein resides in the mitochondrion membrane. The enzyme catalyses a ubiquinone + NADH + 5 H(+)(in) = a ubiquinol + NAD(+) + 4 H(+)(out). Functionally, core subunit of the mitochondrial membrane respiratory chain NADH dehydrogenase (Complex I) that is believed to belong to the minimal assembly required for catalysis. Complex I functions in the transfer of electrons from NADH to the respiratory chain. The immediate electron acceptor for the enzyme is believed to be ubiquinone. This is NADH-ubiquinone oxidoreductase chain 4 (ND4) from Ceratitis capitata (Mediterranean fruit fly).